Reading from the N-terminus, the 288-residue chain is MAEKKQWHETLHDQFGQYFAVDNVLYHEKTDHQDLIIFENAAFGRVMALDGVVQTTERDEFIYHEMMTHVPLLAHGHAKHVLIIGGGDGAMLREVTRHKNVESITMVEIDAGVVSFCRQYLPNHNAGSYDDLRFKLVIDDGVNFVNQTSQTFDVIISDCTDPIGPGESLFTSAFYEGCKRCLNPGGIFVAQNGVCFLQQEEAIDSHRKLSHYFSDVGFYQAAIPTYYGGIMTFAWATDNDALRHLSTEIIQARFLASGLKCRYYNPAVHTAAFALPQYLQDALAPQPS.

Residues 9-238 (ETLHDQFGQY…GIMTFAWATD (230 aa)) form the PABS domain. Gln33 contributes to the S-methyl-5'-thioadenosine binding site. Spermidine is bound by residues His64 and Asp88. S-methyl-5'-thioadenosine is bound by residues Glu108 and 140–141 (DG). Asp158 serves as the catalytic Proton acceptor. 158 to 161 (DCTD) provides a ligand contact to spermidine. Pro165 contributes to the S-methyl-5'-thioadenosine binding site.

The protein belongs to the spermidine/spermine synthase family. In terms of assembly, homodimer or homotetramer.

Its subcellular location is the cytoplasm. The catalysed reaction is S-adenosyl 3-(methylsulfanyl)propylamine + putrescine = S-methyl-5'-thioadenosine + spermidine + H(+). The protein operates within amine and polyamine biosynthesis; spermidine biosynthesis; spermidine from putrescine: step 1/1. Its function is as follows. Catalyzes the irreversible transfer of a propylamine group from the amino donor S-adenosylmethioninamine (decarboxy-AdoMet) to putrescine (1,4-diaminobutane) to yield spermidine. This Shigella dysenteriae serotype 1 (strain Sd197) protein is Polyamine aminopropyltransferase.